The primary structure comprises 321 residues: Glutaminase (321 aa).

Residues Ser-69, Asn-120, Glu-165, Asn-172, Tyr-196, Tyr-248, and Val-266 each contribute to the substrate site.

It belongs to the glutaminase family. Homotetramer.

The catalysed reaction is L-glutamine + H2O = L-glutamate + NH4(+). This Parabacteroides distasonis (strain ATCC 8503 / DSM 20701 / CIP 104284 / JCM 5825 / NCTC 11152) protein is Glutaminase.